The primary structure comprises 269 residues: 4-hydroxy-tetrahydrodipicolinate reductase (269 aa).

Residues 13 to 18 (GASGRM) and Asp-39 contribute to the NAD(+) site. Arg-40 is an NADP(+) binding site. NAD(+) contacts are provided by residues 101–103 (GTT) and 125–128 (APNM). Residue His-158 is the Proton donor/acceptor of the active site. His-159 contacts (S)-2,3,4,5-tetrahydrodipicolinate. Lys-162 serves as the catalytic Proton donor. 168–169 (GT) lines the (S)-2,3,4,5-tetrahydrodipicolinate pocket.

Belongs to the DapB family.

Its subcellular location is the cytoplasm. The catalysed reaction is (S)-2,3,4,5-tetrahydrodipicolinate + NAD(+) + H2O = (2S,4S)-4-hydroxy-2,3,4,5-tetrahydrodipicolinate + NADH + H(+). It catalyses the reaction (S)-2,3,4,5-tetrahydrodipicolinate + NADP(+) + H2O = (2S,4S)-4-hydroxy-2,3,4,5-tetrahydrodipicolinate + NADPH + H(+). The protein operates within amino-acid biosynthesis; L-lysine biosynthesis via DAP pathway; (S)-tetrahydrodipicolinate from L-aspartate: step 4/4. In terms of biological role, catalyzes the conversion of 4-hydroxy-tetrahydrodipicolinate (HTPA) to tetrahydrodipicolinate. The sequence is that of 4-hydroxy-tetrahydrodipicolinate reductase from Bordetella bronchiseptica (strain ATCC BAA-588 / NCTC 13252 / RB50) (Alcaligenes bronchisepticus).